A 110-amino-acid chain; its full sequence is BolA-like protein 3 (110 aa).

The protein belongs to the BolA/IbaG family. As to quaternary structure, interacts with NFU1.

Its subcellular location is the mitochondrion. Acts as a mitochondrial iron-sulfur (Fe-S) cluster assembly factor that facilitates (Fe-S) cluster insertion into a subset of mitochondrial proteins. Probably acts together with NFU1. This Bos taurus (Bovine) protein is BolA-like protein 3 (BOLA3).